The chain runs to 146 residues: Hemoglobin subunit beta-1/2 (146 aa).

Position 1 is an N-acetylvaline (Val-1). Positions 2-146 (HLTPDEKNAV…VATALAHKYH (145 aa)) constitute a Globin domain. Ser-44 is subject to Phosphoserine. The residue at position 59 (Lys-59) is an N6-acetyllysine. The heme b site is built by His-63 and His-92. Cys-93 bears the S-nitrosocysteine mark. Lys-144 is subject to N6-acetyllysine.

It belongs to the globin family. As to quaternary structure, heterotetramer of two alpha chains and two beta chains. Red blood cells.

Functionally, involved in oxygen transport from the lung to the various peripheral tissues. The protein is Hemoglobin subunit beta-1/2 (HBB) of Otolemur crassicaudatus (Brown greater galago).